A 106-amino-acid polypeptide reads, in one-letter code: Large ribosomal subunit protein uL24 (106 aa).

It belongs to the universal ribosomal protein uL24 family. In terms of assembly, part of the 50S ribosomal subunit.

In terms of biological role, one of two assembly initiator proteins, it binds directly to the 5'-end of the 23S rRNA, where it nucleates assembly of the 50S subunit. Functionally, one of the proteins that surrounds the polypeptide exit tunnel on the outside of the subunit. The protein is Large ribosomal subunit protein uL24 of Syntrophus aciditrophicus (strain SB).